A 577-amino-acid chain; its full sequence is 2-succinyl-5-enolpyruvyl-6-hydroxy-3-cyclohexene-1-carboxylate synthase (577 aa).

The protein belongs to the TPP enzyme family. MenD subfamily. In terms of assembly, homodimer. The cofactor is Mg(2+). Requires Mn(2+) as cofactor. Thiamine diphosphate serves as cofactor.

It catalyses the reaction isochorismate + 2-oxoglutarate + H(+) = 5-enolpyruvoyl-6-hydroxy-2-succinyl-cyclohex-3-ene-1-carboxylate + CO2. Its pathway is quinol/quinone metabolism; 1,4-dihydroxy-2-naphthoate biosynthesis; 1,4-dihydroxy-2-naphthoate from chorismate: step 2/7. The protein operates within quinol/quinone metabolism; menaquinone biosynthesis. Its function is as follows. Catalyzes the thiamine diphosphate-dependent decarboxylation of 2-oxoglutarate and the subsequent addition of the resulting succinic semialdehyde-thiamine pyrophosphate anion to isochorismate to yield 2-succinyl-5-enolpyruvyl-6-hydroxy-3-cyclohexene-1-carboxylate (SEPHCHC). This Geobacillus kaustophilus (strain HTA426) protein is 2-succinyl-5-enolpyruvyl-6-hydroxy-3-cyclohexene-1-carboxylate synthase.